Consider the following 58-residue polypeptide: DNA-binding protein (58 aa).

Basic residues-rich tracts occupy residues 1–19 (MVRRRRSRSPYRRRSRSRS) and 28–58 (SRYRSRSRSRSRSRSRARSRSPYHHHINQYI). Residues 1–58 (MVRRRRSRSPYRRRSRSRSRSGSDRSRSRYRSRSRSRSRSRSRARSRSPYHHHINQYI) form a disordered region.

In terms of processing, probably phosphorylated in infected cells.

The protein localises to the virion. Its function is as follows. Thought to be responsible for DNA condensation during packaging of the nucleocapsids. In Cryptophlebia leucotreta granulosis virus (ClGV), this protein is DNA-binding protein (P7.3).